The chain runs to 362 residues: Methylthioribose-1-phosphate isomerase (362 aa).

Substrate contacts are provided by residues 49–51, Arg89, and Gln201; that span reads RGA. Asp242 serves as the catalytic Proton donor. Substrate is bound at residue 252–253; the sequence is NK.

This sequence belongs to the eIF-2B alpha/beta/delta subunits family. MtnA subfamily.

It carries out the reaction 5-(methylsulfanyl)-alpha-D-ribose 1-phosphate = 5-(methylsulfanyl)-D-ribulose 1-phosphate. It functions in the pathway amino-acid biosynthesis; L-methionine biosynthesis via salvage pathway; L-methionine from S-methyl-5-thio-alpha-D-ribose 1-phosphate: step 1/6. Its function is as follows. Catalyzes the interconversion of methylthioribose-1-phosphate (MTR-1-P) into methylthioribulose-1-phosphate (MTRu-1-P). In Leptospira borgpetersenii serovar Hardjo-bovis (strain JB197), this protein is Methylthioribose-1-phosphate isomerase.